We begin with the raw amino-acid sequence, 224 residues long: Cytochrome c oxidase subunit 2 (224 aa).

Topologically, residues 1–26 are mitochondrial intermembrane; it reads MSTWGQINLMDPASPIQMEMMLFHDH. A helical membrane pass occupies residues 27–48; it reads AMAILIGIFTLVSLLGVKLCFN. Residues 49–62 are Mitochondrial matrix-facing; it reads TLSTRTMHEAQLLE. A helical transmembrane segment spans residues 63–82; sequence TLWTILPAFLLVWLALPSLR. At 83-224 the chain is on the mitochondrial intermembrane side; that stretch reads LLYLLDEQGS…DVKDFIKMCN (142 aa). Cu cation contacts are provided by His-161, Cys-196, Glu-198, Cys-200, His-204, and Met-207. Glu-198 lines the Mg(2+) pocket.

Belongs to the cytochrome c oxidase subunit 2 family. As to quaternary structure, component of the cytochrome c oxidase (complex IV, CIV), a multisubunit enzyme composed of a catalytic core of 3 subunits and several supernumerary subunits. The complex exists as a monomer or a dimer and forms supercomplexes (SCs) in the inner mitochondrial membrane with ubiquinol-cytochrome c oxidoreductase (cytochrome b-c1 complex, complex III, CIII). The cofactor is Cu cation.

Its subcellular location is the mitochondrion inner membrane. It carries out the reaction 4 Fe(II)-[cytochrome c] + O2 + 8 H(+)(in) = 4 Fe(III)-[cytochrome c] + 2 H2O + 4 H(+)(out). Its function is as follows. Component of the cytochrome c oxidase, the last enzyme in the mitochondrial electron transport chain which drives oxidative phosphorylation. The respiratory chain contains 3 multisubunit complexes succinate dehydrogenase (complex II, CII), ubiquinol-cytochrome c oxidoreductase (cytochrome b-c1 complex, complex III, CIII) and cytochrome c oxidase (complex IV, CIV), that cooperate to transfer electrons derived from NADH and succinate to molecular oxygen, creating an electrochemical gradient over the inner membrane that drives transmembrane transport and the ATP synthase. Cytochrome c oxidase is the component of the respiratory chain that catalyzes the reduction of oxygen to water. Electrons originating from reduced cytochrome c in the intermembrane space (IMS) are transferred via the dinuclear copper A center (CU(A)) of subunit 2 and heme A of subunit 1 to the active site in subunit 1, a binuclear center (BNC) formed by heme A3 and copper B (CU(B)). The BNC reduces molecular oxygen to 2 water molecules using 4 electrons from cytochrome c in the IMS and 4 protons from the mitochondrial matrix. The polypeptide is Cytochrome c oxidase subunit 2 (COII) (Albinaria caerulea (Land snail)).